Consider the following 837-residue polypeptide: Mannosyl-oligosaccharide glucosidase (837 aa).

A compositionally biased stretch (basic residues) spans 1-10; that stretch reads MARGERRRRA. Over 1 to 38 the chain is Cytoplasmic; the sequence is MARGERRRRAVPAEGVRTAERAARGGPGRRDGRGGGPR. The segment at 1–39 is disordered; that stretch reads MARGERRRRAVPAEGVRTAERAARGGPGRRDGRGGGPRS. The Endoplasmic reticulum targeting motif lies at 3 to 9; sequence RGERRRR. Residues 17–33 are compositionally biased toward basic and acidic residues; that stretch reads RTAERAARGGPGRRDGR. Residues 39-59 traverse the membrane as a helical; Signal-anchor for type II membrane protein segment; that stretch reads STAGGVALAVVVLSLALGMSG. Residues 60-837 lie on the Lumenal side of the membrane; sequence RWVLAWYRAR…LVLLAMAEDY (778 aa). The segment at 76–137 is required for endoplasmic reticulum targeting; the sequence is SAPPVLPADS…PGTPKLRHTC (62 aa). The Proton donor role is filled by Asp583. Residue Asn657 is glycosylated (N-linked (GlcNAc...) asparagine). The active-site Proton acceptor is Glu807.

This sequence belongs to the glycosyl hydrolase 63 family.

The protein resides in the endoplasmic reticulum membrane. The catalysed reaction is N(4)-(alpha-D-Glc-(1-&gt;2)-alpha-D-Glc-(1-&gt;3)-alpha-D-Glc-(1-&gt;3)-alpha-D-Man-(1-&gt;2)-alpha-D-Man-(1-&gt;2)-alpha-D-Man-(1-&gt;3)-[alpha-D-Man-(1-&gt;2)-alpha-D-Man-(1-&gt;3)-[alpha-D-Man-(1-&gt;2)-alpha-D-Man-(1-&gt;6)]-alpha-D-Man-(1-&gt;6)]-beta-D-Man-(1-&gt;4)-beta-D-GlcNAc-(1-&gt;4)-beta-D-GlcNAc)-L-asparaginyl-[protein] + H2O = N(4)-(alpha-D-Glc-(1-&gt;3)-alpha-D-Glc-(1-&gt;3)-alpha-D-Man-(1-&gt;2)-alpha-D-Man-(1-&gt;2)-alpha-D-Man-(1-&gt;3)-[alpha-D-Man-(1-&gt;2)-alpha-D-Man-(1-&gt;3)-[alpha-D-Man-(1-&gt;2)-alpha-D-Man-(1-&gt;6)]-alpha-D-Man-(1-&gt;6)]-beta-D-Man-(1-&gt;4)-beta-D-GlcNAc-(1-&gt;4)-beta-D-GlcNAc)-L-asparaginyl-[protein] + beta-D-glucose. It participates in glycan metabolism; N-glycan degradation. Its activity is regulated as follows. Inhibited by 1-deoxynojirimycin (40% inhibition) and N,N-dimethyl-deoxynojirimycin (85% inhibition). In terms of biological role, in the context of N-glycan degradation, cleaves the distal alpha 1,2-linked glucose residue from the Glc(3)Man(9)GlcNAc(2) oligosaccharide precursor in a highly specific manner. This Homo sapiens (Human) protein is Mannosyl-oligosaccharide glucosidase.